Consider the following 511-residue polypeptide: Aprataxin and PNK-like factor (511 aa).

Residues 1 to 108 (MSGGFELQPR…RILSIPSEVE (108 aa)) form the FHA-like domain. A Phosphoserine; by ATM modification is found at Ser116. Phosphoserine is present on Ser149. The KBM signature appears at 182–191 (RKRILPTWML). The tract at residues 223 to 370 (KSQLNTTQQG…ATDSVLQGSE (148 aa)) is disordered. Polar residues-rich tracts occupy residues 225-249 (QLNTTQQGRRQLISSGSSENTSAEQ) and 263-293 (STISSKEMPQSFSAITLSNTEMNNIKTNAQR). Basic residues predominate over residues 304-315 (VSKHKIATKRTP). Polar residues predominate over residues 324–344 (CSENCSSAQGDSLQDESQGSH). Positions 345-355 (SESSSNPSNPE) are enriched in low complexity. 4 residues coordinate a glycoprotein: Arg376, Tyr381, Tyr386, and Arg387. A PBZ-type 1 zinc finger spans residues 377-398 (TSCMYGANCYRKNPVHFQHFSH). The interval 406–416 (GVQIVGQDETD) is flexible linker. The segment at 419–440 (PECPYGPSCYRKNPQHKIEYRH) adopts a PBZ-type 2 zinc-finger fold. Positions 423, 428, and 429 each coordinate a glycoprotein. The tract at residues 449–497 (LDEDNDNVGQPNEYDLNDSFLDDEEEDYEPTDEDSDWEPGKEDEEKEDV) is disordered. A compositionally biased stretch (acidic residues) spans 468–497 (FLDDEEEDYEPTDEDSDWEPGKEDEEKEDV). The NAP1L motif signature appears at 476-500 (YEPTDEDSDWEPGKEDEEKEDVEEL). Residues 487-511 (PGKEDEEKEDVEELLKEAKRFMKRK) are a coiled coil.

It belongs to the APLF family. As to quaternary structure, interacts with LIG4. Interacts with PARP1. Interacts with XRCC4. Interacts (via KBM motif) with XRCC5 and XRCC6; promoting recruitment to DNA damage sites. Interacts with XRCC1. Interacts (via C-terminal disordered region) with histones; interacts with histone H2A, H2B and H3-H4. Post-translationally, poly-ADP-ribosylated. In addition to binding non covalently poly-ADP-ribose via its PBZ-type zinc fingers, the protein is also covalently poly-ADP-ribosylated by PARP1. In terms of processing, phosphorylated in an ATM-dependent manner upon double-strand DNA break.

The protein resides in the nucleus. It localises to the chromosome. The protein localises to the cytoplasm. It is found in the cytosol. In terms of biological role, histone chaperone involved in single-strand and double-strand DNA break repair. Recruited to sites of DNA damage through interaction with branched poly-ADP-ribose chains, a polymeric post-translational modification synthesized transiently at sites of chromosomal damage to accelerate DNA strand break repair reactions. Following recruitment to DNA damage sites, acts as a histone chaperone that mediates histone eviction during DNA repair and promotes recruitment of histone variant MACROH2A1. Also has a nuclease activity: displays apurinic-apyrimidinic (AP) endonuclease and 3'-5' exonuclease activities in vitro. Also able to introduce nicks at hydroxyuracil and other types of pyrimidine base damage. Together with PARP3, promotes the retention of the LIG4-XRCC4 complex on chromatin and accelerate DNA ligation during non-homologous end-joining (NHEJ). Also acts as a negative regulator of cell pluripotency by promoting histone exchange. Required for the embryo implantation during the epithelial to mesenchymal transition in females. This chain is Aprataxin and PNK-like factor, found in Homo sapiens (Human).